The primary structure comprises 161 residues: uncharacterized protein (161 aa).

This is an uncharacterized protein from Escherichia coli (strain K12).